The primary structure comprises 310 residues: Ribosomal protein uL3 glutamine methyltransferase (310 aa).

Belongs to the protein N5-glutamine methyltransferase family. PrmB subfamily.

It catalyses the reaction L-glutaminyl-[ribosomal protein uL3] + S-adenosyl-L-methionine = N(5)-methyl-L-glutaminyl-[ribosomal protein uL3] + S-adenosyl-L-homocysteine + H(+). Functionally, methylates large ribosomal subunit protein uL3 on a specific glutamine residue. In Yersinia pestis, this protein is Ribosomal protein uL3 glutamine methyltransferase.